The following is a 227-amino-acid chain: MAYPLQLGLQDATSPIMEELMNFHDHTLMIVFLISSLVLYIISLMLTTKLTHTSTMDAQEVETIWTILPAVILIMIALPSLRILYMMDEINNPVLTVKTMGHQWYWSYEYTDYEDLCFDSYMVPTNDLKPGELRLLEVDNRVVLPMELPIRMLISSEDVLHSWAVPSLGLKTDAIPGRLNQATVTSNRPGLFYGQCSEICGSNHSFMPIVLEMVPLKHFENWSASMI.

The Mitochondrial intermembrane portion of the chain corresponds to 1–14 (MAYPLQLGLQDATS). A helical transmembrane segment spans residues 15 to 45 (PIMEELMNFHDHTLMIVFLISSLVLYIISLM). Over 46–59 (LTTKLTHTSTMDAQ) the chain is Mitochondrial matrix. The chain crosses the membrane as a helical span at residues 60 to 87 (EVETIWTILPAVILIMIALPSLRILYMM). Topologically, residues 88-227 (DEINNPVLTV…HFENWSASMI (140 aa)) are mitochondrial intermembrane. Residues His-161, Cys-196, Glu-198, Cys-200, His-204, and Met-207 each contribute to the Cu cation site. Position 198 (Glu-198) interacts with Mg(2+).

The protein belongs to the cytochrome c oxidase subunit 2 family. As to quaternary structure, component of the cytochrome c oxidase (complex IV, CIV), a multisubunit enzyme composed of 14 subunits. The complex is composed of a catalytic core of 3 subunits MT-CO1, MT-CO2 and MT-CO3, encoded in the mitochondrial DNA, and 11 supernumerary subunits COX4I, COX5A, COX5B, COX6A, COX6B, COX6C, COX7A, COX7B, COX7C, COX8 and NDUFA4, which are encoded in the nuclear genome. The complex exists as a monomer or a dimer and forms supercomplexes (SCs) in the inner mitochondrial membrane with NADH-ubiquinone oxidoreductase (complex I, CI) and ubiquinol-cytochrome c oxidoreductase (cytochrome b-c1 complex, complex III, CIII), resulting in different assemblies (supercomplex SCI(1)III(2)IV(1) and megacomplex MCI(2)III(2)IV(2)). Found in a complex with TMEM177, COA6, COX18, COX20, SCO1 and SCO2. Interacts with TMEM177 in a COX20-dependent manner. Interacts with COX20. Interacts with COX16. Requires Cu cation as cofactor.

The protein localises to the mitochondrion inner membrane. It carries out the reaction 4 Fe(II)-[cytochrome c] + O2 + 8 H(+)(in) = 4 Fe(III)-[cytochrome c] + 2 H2O + 4 H(+)(out). Its function is as follows. Component of the cytochrome c oxidase, the last enzyme in the mitochondrial electron transport chain which drives oxidative phosphorylation. The respiratory chain contains 3 multisubunit complexes succinate dehydrogenase (complex II, CII), ubiquinol-cytochrome c oxidoreductase (cytochrome b-c1 complex, complex III, CIII) and cytochrome c oxidase (complex IV, CIV), that cooperate to transfer electrons derived from NADH and succinate to molecular oxygen, creating an electrochemical gradient over the inner membrane that drives transmembrane transport and the ATP synthase. Cytochrome c oxidase is the component of the respiratory chain that catalyzes the reduction of oxygen to water. Electrons originating from reduced cytochrome c in the intermembrane space (IMS) are transferred via the dinuclear copper A center (CU(A)) of subunit 2 and heme A of subunit 1 to the active site in subunit 1, a binuclear center (BNC) formed by heme A3 and copper B (CU(B)). The BNC reduces molecular oxygen to 2 water molecules using 4 electrons from cytochrome c in the IMS and 4 protons from the mitochondrial matrix. The protein is Cytochrome c oxidase subunit 2 (MT-CO2) of Zelotomys hildegardeae (Hildegarde's broad-headed mouse).